A 362-amino-acid chain; its full sequence is Protein RecA (362 aa).

ATP is bound at residue 77-84 (GPESSGKT).

The protein belongs to the RecA family.

Its subcellular location is the cytoplasm. Its function is as follows. Can catalyze the hydrolysis of ATP in the presence of single-stranded DNA, the ATP-dependent uptake of single-stranded DNA by duplex DNA, and the ATP-dependent hybridization of homologous single-stranded DNAs. It interacts with LexA causing its activation and leading to its autocatalytic cleavage. The polypeptide is Protein RecA (Rhizobium leguminosarum bv. trifolii (strain WSM2304)).